Reading from the N-terminus, the 72-residue chain is Translation initiation factor IF-1 (72 aa).

In terms of domain architecture, S1-like spans 1–72; it reads MSKEDVIEVE…SRGRIVYRFK (72 aa).

It belongs to the IF-1 family. As to quaternary structure, component of the 30S ribosomal translation pre-initiation complex which assembles on the 30S ribosome in the order IF-2 and IF-3, IF-1 and N-formylmethionyl-tRNA(fMet); mRNA recruitment can occur at any time during PIC assembly.

Its subcellular location is the cytoplasm. Its function is as follows. One of the essential components for the initiation of protein synthesis. Stabilizes the binding of IF-2 and IF-3 on the 30S subunit to which N-formylmethionyl-tRNA(fMet) subsequently binds. Helps modulate mRNA selection, yielding the 30S pre-initiation complex (PIC). Upon addition of the 50S ribosomal subunit IF-1, IF-2 and IF-3 are released leaving the mature 70S translation initiation complex. The polypeptide is Translation initiation factor IF-1 (Desulfitobacterium hafniense (strain Y51)).